The following is a 286-amino-acid chain: Nucleotide-binding protein Tgr7_0722 (286 aa).

8-15 (GLSGSGKS) contacts ATP. 60–63 (DVRS) contacts GTP.

This sequence belongs to the RapZ-like family.

In terms of biological role, displays ATPase and GTPase activities. This is Nucleotide-binding protein Tgr7_0722 from Thioalkalivibrio sulfidiphilus (strain HL-EbGR7).